The chain runs to 244 residues: UPF0246 protein SGO_1307 (244 aa).

The protein belongs to the UPF0246 family.

This is UPF0246 protein SGO_1307 from Streptococcus gordonii (strain Challis / ATCC 35105 / BCRC 15272 / CH1 / DL1 / V288).